The primary structure comprises 410 residues: Argininosuccinate synthase (410 aa).

Residue 8-16 (AYSGGLDTS) participates in ATP binding. Y86 serves as a coordination point for L-citrulline. G116 is an ATP binding site. Positions 118, 122, and 123 each coordinate L-aspartate. N122 is a binding site for L-citrulline. Positions 126, 174, 259, and 271 each coordinate L-citrulline.

The protein belongs to the argininosuccinate synthase family. Type 1 subfamily. Homotetramer.

The protein resides in the cytoplasm. It catalyses the reaction L-citrulline + L-aspartate + ATP = 2-(N(omega)-L-arginino)succinate + AMP + diphosphate + H(+). Its pathway is amino-acid biosynthesis; L-arginine biosynthesis; L-arginine from L-ornithine and carbamoyl phosphate: step 2/3. This is Argininosuccinate synthase from Leuconostoc citreum (strain KM20).